The chain runs to 1358 residues: Phosphoinositide 3-kinase regulatory subunit 4 (1358 aa).

Glycine 2 carries N-myristoyl glycine lipidation. A Protein kinase domain is found at 26–324 (FEYDKSLGST…AFPEIFYTFL (299 aa)). ATP-binding positions include 32–40 (LGSTRFFKV) and lysine 53. The active-site Proton acceptor is the aspartate 148. HEAT repeat units lie at residues 373-411 (NGLV…RLGV), 413-450 (ILLD…LVKE), 458-495 (IYPE…TALR), 531-570 (QALH…FFGR), 572-610 (KAND…YVGW), 612-648 (SSSI…LGLL), and 690-726 (DVYC…PVSR). A phosphoserine mark is found at serine 808, serine 813, serine 853, and serine 865. A disordered region spans residues 875–899 (LPKGSDQEVIQTGKPPRSESSAGIC). 6 WD repeats span residues 991–1030 (EHKS…GKTT), 1040–1079 (RVGG…LPKS), 1093–1134 (KEDG…NAWT), 1139–1178 (LKSG…PISS), 1182–1223 (PSRA…RRFT), and 1237–1278 (PSPH…RSYV). The tract at residues 1307–1326 (KQKVGPSDDTPRRGPESLPV) is disordered. Over residues 1315–1326 (DTPRRGPESLPV) the composition is skewed to basic and acidic residues. Position 1316 is a phosphothreonine (threonine 1316). The stretch at 1327–1358 (GHHDIITDVATFQTTQGFIVTASRDGIVKVWK) is one WD 7 repeat.

This sequence belongs to the protein kinase superfamily. Ser/Thr protein kinase family. In terms of assembly, component of the PI3K (PI3KC3/PI3K-III/class III phosphatidylinositol 3-kinase) complex the core of which is composed of the catalytic subunit PIK3C3, the regulatory subunit PIK3R4 and BECN1 associating with additional regulatory/auxiliary subunits to form alternative complex forms. Alternative complex forms containing a fourth regulatory subunit in a mutually exclusive manner are PI3K complex I (PI3KC3-C1) containing ATG14, and PI3K complex II (PI3KC3-C2) containing UVRAG. PI3KC3-C1 displays a V-shaped architecture with PIK3R4 serving as a bridge between PIK3C3 and the ATG14:BECN1 subcomplex. Both, PI3KC3-C1 and PI3KC3-C2, can associate with further regulatory subunits, such as RUBCN, SH3GLB1/Bif-1, AMBRA1 and NRBF2. PI3KC3-C1 probably associates with PIK3CB. Interacts with RAB7A in the presence of PIK3C3/VPS34. Interacts with NRBF2. Interacts with ARMC3. Mn(2+) serves as cofactor. In terms of processing, myristoylated. Post-translationally, probably autophosphorylated.

The protein localises to the late endosome. The protein resides in the cytoplasmic vesicle. It localises to the autophagosome. Its subcellular location is the membrane. It catalyses the reaction L-seryl-[protein] + ATP = O-phospho-L-seryl-[protein] + ADP + H(+). It carries out the reaction L-threonyl-[protein] + ATP = O-phospho-L-threonyl-[protein] + ADP + H(+). Regulatory subunit of the PI3K complex that mediates formation of phosphatidylinositol 3-phosphate; different complex forms are believed to play a role in multiple membrane trafficking pathways: PI3KC3-C1 is involved in initiation of autophagosomes and PI3KC3-C2 in maturation of autophagosomes and endocytosis. Involved in regulation of degradative endocytic trafficking and cytokinesis, probably in the context of PI3KC3-C2. Its function is as follows. Regulatory subunit of the PI3K complex. May regulate membrane trafficking late in the endocytic pathway. The polypeptide is Phosphoinositide 3-kinase regulatory subunit 4 (PIK3R4) (Pongo abelii (Sumatran orangutan)).